A 73-amino-acid polypeptide reads, in one-letter code: Large ribosomal subunit protein bL31 (73 aa).

It belongs to the bacterial ribosomal protein bL31 family. Type A subfamily. Part of the 50S ribosomal subunit.

Functionally, binds the 23S rRNA. The protein is Large ribosomal subunit protein bL31 (rpmE) of Roseobacter denitrificans (strain ATCC 33942 / OCh 114) (Erythrobacter sp. (strain OCh 114)).